Consider the following 373-residue polypeptide: Queuine tRNA-ribosyltransferase (373 aa).

Asp-94 functions as the Proton acceptor in the catalytic mechanism. Substrate is bound by residues 94–98 (DSGGF), Asp-148, Gln-190, and Gly-217. The interval 248–254 (GVGSPDC) is RNA binding. Catalysis depends on Asp-267, which acts as the Nucleophile. An RNA binding; important for wobble base 34 recognition region spans residues 272–276 (TRIAR). Residues Cys-305, Cys-307, Cys-310, and His-336 each coordinate Zn(2+).

The protein belongs to the queuine tRNA-ribosyltransferase family. As to quaternary structure, homodimer. Within each dimer, one monomer is responsible for RNA recognition and catalysis, while the other monomer binds to the replacement base PreQ1. Zn(2+) is required as a cofactor.

The catalysed reaction is 7-aminomethyl-7-carbaguanine + guanosine(34) in tRNA = 7-aminomethyl-7-carbaguanosine(34) in tRNA + guanine. It participates in tRNA modification; tRNA-queuosine biosynthesis. Catalyzes the base-exchange of a guanine (G) residue with the queuine precursor 7-aminomethyl-7-deazaguanine (PreQ1) at position 34 (anticodon wobble position) in tRNAs with GU(N) anticodons (tRNA-Asp, -Asn, -His and -Tyr). Catalysis occurs through a double-displacement mechanism. The nucleophile active site attacks the C1' of nucleotide 34 to detach the guanine base from the RNA, forming a covalent enzyme-RNA intermediate. The proton acceptor active site deprotonates the incoming PreQ1, allowing a nucleophilic attack on the C1' of the ribose to form the product. After dissociation, two additional enzymatic reactions on the tRNA convert PreQ1 to queuine (Q), resulting in the hypermodified nucleoside queuosine (7-(((4,5-cis-dihydroxy-2-cyclopenten-1-yl)amino)methyl)-7-deazaguanosine). The sequence is that of Queuine tRNA-ribosyltransferase from Moorella thermoacetica (strain ATCC 39073 / JCM 9320).